The chain runs to 380 residues: Omega-3 fatty acid desaturase, endoplasmic reticulum (380 aa).

Residues 59–78 traverse the membrane as a helical segment; the sequence is VLVVTALAASAISFNSWFFW. Residues 97 to 101 carry the Histidine box-1 motif; sequence HDCGH. The short motif at 133 to 137 is the Histidine box-2 element; that stretch reads HRTHH. The next 2 helical transmembrane spans lie at 208-231 and 238-256; these read GVVT…LTIG and LYGV…VTYL. Positions 300 to 304 match the Histidine box-3 motif; it reads HVIHH.

This sequence belongs to the fatty acid desaturase type 1 family.

Its subcellular location is the endoplasmic reticulum membrane. It participates in lipid metabolism; polyunsaturated fatty acid biosynthesis. In terms of biological role, microsomal (ER) omega-3 fatty acid desaturase introduces the third double bond in the biosynthesis of 18:3 fatty acids, important constituents of plant membranes. It is thought to use cytochrome b5 as an electron donor and to act on fatty acids esterified to phosphatidylcholine and, possibly, other phospholipids. The protein is Omega-3 fatty acid desaturase, endoplasmic reticulum (ARG1) of Vigna radiata var. radiata (Mung bean).